A 269-amino-acid chain; its full sequence is Phosphatidylglycerol--prolipoprotein diacylglyceryl transferase (269 aa).

7 helical membrane passes run 17–37 (IGPI…MLGW), 59–79 (FLVW…VLFY), 95–115 (WQGG…IIAF), 123–143 (LFQV…FGRI), 181–201 (AGLE…LTGI), 206–226 (GALS…SEFF), and 242–262 (MGQL…AWAL). A 1,2-diacyl-sn-glycero-3-phospho-(1'-sn-glycerol) is bound at residue Arg-142.

This sequence belongs to the Lgt family.

It is found in the cell inner membrane. It carries out the reaction L-cysteinyl-[prolipoprotein] + a 1,2-diacyl-sn-glycero-3-phospho-(1'-sn-glycerol) = an S-1,2-diacyl-sn-glyceryl-L-cysteinyl-[prolipoprotein] + sn-glycerol 1-phosphate + H(+). The protein operates within protein modification; lipoprotein biosynthesis (diacylglyceryl transfer). In terms of biological role, catalyzes the transfer of the diacylglyceryl group from phosphatidylglycerol to the sulfhydryl group of the N-terminal cysteine of a prolipoprotein, the first step in the formation of mature lipoproteins. The polypeptide is Phosphatidylglycerol--prolipoprotein diacylglyceryl transferase (Paramagnetospirillum magneticum (strain ATCC 700264 / AMB-1) (Magnetospirillum magneticum)).